Consider the following 155-residue polypeptide: SsrA-binding protein (155 aa).

Belongs to the SmpB family.

Its subcellular location is the cytoplasm. Required for rescue of stalled ribosomes mediated by trans-translation. Binds to transfer-messenger RNA (tmRNA), required for stable association of tmRNA with ribosomes. tmRNA and SmpB together mimic tRNA shape, replacing the anticodon stem-loop with SmpB. tmRNA is encoded by the ssrA gene; the 2 termini fold to resemble tRNA(Ala) and it encodes a 'tag peptide', a short internal open reading frame. During trans-translation Ala-aminoacylated tmRNA acts like a tRNA, entering the A-site of stalled ribosomes, displacing the stalled mRNA. The ribosome then switches to translate the ORF on the tmRNA; the nascent peptide is terminated with the 'tag peptide' encoded by the tmRNA and targeted for degradation. The ribosome is freed to recommence translation, which seems to be the essential function of trans-translation. The chain is SsrA-binding protein from Streptococcus pneumoniae serotype 4 (strain ATCC BAA-334 / TIGR4).